Consider the following 299-residue polypeptide: MRKYSQRHIPVMVREVIEFLKPEDEKIILDCTVGEGGHSRAILEHCPGCRIIGIDVDSEVLRIAEEKLKEFSDRVSLFKVSYREADFLLKTLGIEKVDGILMDLGVSTYQLKGENRGFTFEREEPLDMRMDLESEVTAQKVLNELPEEELARIIFEYGEEKRFARRIARKIVENRPLNTTLDLVKAVREALPSYEIRRRKRHFATKTFQAIRIYVNRELENLKEFLKKAEDLLNPGGRIVVISFHSLEDRIVKETFRNSKKLRILTEKPVRPSEEEIRENPRARSGRLRAAERIEEGGD.

S-adenosyl-L-methionine-binding positions include 36–38, aspartate 55, tyrosine 82, aspartate 103, and glutamine 110; that span reads GGH. Basic and acidic residues-rich tracts occupy residues 269-282 and 289-299; these read PVRP…ENPR and RAAERIEEGGD. The interval 269–299 is disordered; that stretch reads PVRPSEEEIRENPRARSGRLRAAERIEEGGD.

Belongs to the methyltransferase superfamily. RsmH family.

It is found in the cytoplasm. The catalysed reaction is cytidine(1402) in 16S rRNA + S-adenosyl-L-methionine = N(4)-methylcytidine(1402) in 16S rRNA + S-adenosyl-L-homocysteine + H(+). Functionally, specifically methylates the N4 position of cytidine in position 1402 (C1402) of 16S rRNA. This Thermotoga maritima (strain ATCC 43589 / DSM 3109 / JCM 10099 / NBRC 100826 / MSB8) protein is Ribosomal RNA small subunit methyltransferase H.